The following is a 203-amino-acid chain: Microtubule-associated protein Jupiter (203 aa).

Ser30 is subject to Phosphoserine. 2 positions are modified to phosphothreonine: Thr41 and Thr102. Over residues 123 to 132 (LISKGNYNGK) the composition is skewed to polar residues. Disordered stretches follow at residues 123–163 (LISK…GNPV) and 182–203 (NGGS…SGLW). The span at 133–146 (SGSVSSASSSVSSS) shows a compositional bias: low complexity. 2 positions are modified to phosphoserine: Ser135 and Ser146.

The protein belongs to the MAP Jupiter family.

It localises to the nucleus. The protein resides in the cytoplasm. Its subcellular location is the cytoskeleton. It is found in the spindle. Functionally, binds to all microtubule populations. This is Microtubule-associated protein Jupiter from Drosophila mojavensis (Fruit fly).